Consider the following 198-residue polypeptide: Glycerol-3-phosphate acyltransferase (198 aa).

Transmembrane regions (helical) follow at residues Ile2–Leu22, Leu53–Thr73, Pro79–Leu99, Val113–Ile133, and Ile152–Leu172.

This sequence belongs to the PlsY family. Probably interacts with PlsX.

It localises to the cell membrane. The catalysed reaction is an acyl phosphate + sn-glycerol 3-phosphate = a 1-acyl-sn-glycero-3-phosphate + phosphate. It functions in the pathway lipid metabolism; phospholipid metabolism. Its function is as follows. Catalyzes the transfer of an acyl group from acyl-phosphate (acyl-PO(4)) to glycerol-3-phosphate (G3P) to form lysophosphatidic acid (LPA). This enzyme utilizes acyl-phosphate as fatty acyl donor, but not acyl-CoA or acyl-ACP. The sequence is that of Glycerol-3-phosphate acyltransferase from Lawsonia intracellularis (strain PHE/MN1-00).